Consider the following 292-residue polypeptide: Ribosomal protein L11 methyltransferase (292 aa).

4 residues coordinate S-adenosyl-L-methionine: threonine 143, glycine 164, aspartate 186, and asparagine 227.

Belongs to the methyltransferase superfamily. PrmA family.

Its subcellular location is the cytoplasm. It catalyses the reaction L-lysyl-[protein] + 3 S-adenosyl-L-methionine = N(6),N(6),N(6)-trimethyl-L-lysyl-[protein] + 3 S-adenosyl-L-homocysteine + 3 H(+). Its function is as follows. Methylates ribosomal protein L11. The chain is Ribosomal protein L11 methyltransferase from Hahella chejuensis (strain KCTC 2396).